We begin with the raw amino-acid sequence, 484 residues long: Rho guanine nucleotide exchange factor 35 (484 aa).

The interval 139 to 418 is disordered; that stretch reads FSSDLGSEEE…ALIAPEDSPH (280 aa). The residue at position 184 (serine 184) is a Phosphoserine. A compositionally biased stretch (low complexity) spans 217–237; that stretch reads ESQGLLHPQEVQVLEEQGQQE. The span at 266-278 shows a compositional bias: basic and acidic residues; that stretch reads NDEKGEQKQKQEQ. The span at 299–309 shows a compositional bias: acidic residues; it reads GLNDGEWEQED. Composition is skewed to basic and acidic residues over residues 323–368 and 394–404; these read GEER…KEKG and RSREEENEHHG.

In Homo sapiens (Human), this protein is Rho guanine nucleotide exchange factor 35 (ARHGEF35).